A 420-amino-acid chain; its full sequence is WD repeat-containing protein jip5 (420 aa).

6 WD repeats span residues 9 to 48, 72 to 111, 117 to 158, 221 to 262, 271 to 314, and 318 to 355; these read PLSADLFSQALHPKEPVVSVGLSSGHVQTFRLPSDEVDSD, RHKGSCRCLGFGVDGEMLYSAGTDGLVKAAKAETGVVENK, DKNG…SKVS, VSSV…DQDE, GGGE…VVSE, and DETEGVVGLGFDVEGRMVSGGGQIVKVWHEAVDSGDGV. The segment at 39–63 is disordered; the sequence is RLPSDEVDSDDDGASTSSSRTGRGH. Residues 350–420 form a disordered region; it reads DSGDGVNGNE…QAVMAFHDLD (71 aa). Residues 368–387 show a composition bias toward acidic residues; that stretch reads DDSDEDSDDGDDDDDSGDSD. Over residues 394–406 the composition is skewed to basic residues; it reads DARKKRKKGKTPK.

Belongs to the WD repeat WDR55 family.

It is found in the nucleus. It localises to the nucleolus. In Aspergillus terreus (strain NIH 2624 / FGSC A1156), this protein is WD repeat-containing protein jip5 (jip5).